The sequence spans 96 residues: DNA-directed RNA polymerase subunit Rpo11 (96 aa).

The protein belongs to the archaeal Rpo11/eukaryotic RPB11/RPC19 RNA polymerase subunit family. Part of the RNA polymerase complex.

The protein localises to the cytoplasm. The catalysed reaction is RNA(n) + a ribonucleoside 5'-triphosphate = RNA(n+1) + diphosphate. In terms of biological role, DNA-dependent RNA polymerase (RNAP) catalyzes the transcription of DNA into RNA using the four ribonucleoside triphosphates as substrates. The chain is DNA-directed RNA polymerase subunit Rpo11 from Haloquadratum walsbyi (strain DSM 16790 / HBSQ001).